The sequence spans 278 residues: Casein kinase II subunit beta (278 aa).

Disordered regions lie at residues 1–22 and 78–111; these read MSQE…DSGA and DEEE…RNKS. An N-acetylserine modification is found at serine 2. The residue at position 2 (serine 2) is a Phosphoserine. A compositionally biased stretch (acidic residues) spans 78 to 94; the sequence is DEEEDEDDVVEEDEVDQ.

The protein belongs to the casein kinase 2 subunit beta family. In terms of assembly, tetramer composed of an alpha subunit, an alpha' subunit, one beta subunit and one beta' subunit. Interacts with FACT subunits POB3 and SPT16. interacts with YTA7. In terms of processing, phosphorylated by alpha subunit.

Functionally, regulatory subunit of casein kinase II/CK2. As part of the kinase complex regulates the basal catalytic activity of the alpha subunit a constitutively active serine/threonine-protein kinase that phosphorylates a large number of substrates containing acidic residues C-terminal to the phosphorylated serine or threonine. This is Casein kinase II subunit beta (CKB1) from Saccharomyces cerevisiae (strain ATCC 204508 / S288c) (Baker's yeast).